A 130-amino-acid chain; its full sequence is MAKLSNEELLDAFKEMTLIELSEFVKQFEETFDVSAAAPVAVAAAGAPAAGGEAAPAEEEKDEFDVILESAGDKKIQVIKEVRGLTSLGLKDAKDLVESAPKPVLEKAKKEDAEKAKEALEAAGATVTLK.

It belongs to the bacterial ribosomal protein bL12 family. As to quaternary structure, homodimer. Part of the ribosomal stalk of the 50S ribosomal subunit. Forms a multimeric L10(L12)X complex, where L10 forms an elongated spine to which 2 to 4 L12 dimers bind in a sequential fashion. Binds GTP-bound translation factors.

Functionally, forms part of the ribosomal stalk which helps the ribosome interact with GTP-bound translation factors. Is thus essential for accurate translation. The chain is Large ribosomal subunit protein bL12 from Cutibacterium acnes (strain DSM 16379 / KPA171202) (Propionibacterium acnes).